Consider the following 107-residue polypeptide: Phosphoribosyl-ATP pyrophosphatase (107 aa).

Belongs to the PRA-PH family.

It is found in the cytoplasm. It carries out the reaction 1-(5-phospho-beta-D-ribosyl)-ATP + H2O = 1-(5-phospho-beta-D-ribosyl)-5'-AMP + diphosphate + H(+). It functions in the pathway amino-acid biosynthesis; L-histidine biosynthesis; L-histidine from 5-phospho-alpha-D-ribose 1-diphosphate: step 2/9. This chain is Phosphoribosyl-ATP pyrophosphatase, found in Methylobacterium radiotolerans (strain ATCC 27329 / DSM 1819 / JCM 2831 / NBRC 15690 / NCIMB 10815 / 0-1).